A 161-amino-acid polypeptide reads, in one-letter code: V-type proton ATPase 16 kDa proteolipid subunit c (161 aa).

Residues 1-15 (MSYDLATAERAAYAP) are Lumenal-facing. A helical transmembrane segment spans residues 16–36 (FFGYMGAASAQIFTVLGAAYG). The Cytoplasmic portion of the chain corresponds to 37–58 (TAKSAVGISSMGVMRPELIMKS). Residues 59-79 (VIPVIMAGIIGIYGLVVAMVL) form a helical membrane-spanning segment. The Lumenal segment spans residues 80 to 98 (RGKVTSASAGYTLDKGFAH). Residues 99 to 119 (LAAGLTCGLCGLGAGYAIGIV) form a helical membrane-spanning segment. Residues 120–137 (GDAGVRGTAQQPRLFVGM) lie on the Cytoplasmic side of the membrane. Residues 138–158 (ILILIFSEVLGLYGMIVALIL) form a helical membrane-spanning segment. Residues 159 to 161 (GTS) lie on the Lumenal side of the membrane.

This sequence belongs to the V-ATPase proteolipid subunit family. In terms of assembly, V-ATPase is a heteromultimeric enzyme made up of two complexes: the ATP-hydrolytic V1 complex and the proton translocation V0 complex. The V1 complex consists of three catalytic AB heterodimers that form a heterohexamer, three peripheral stalks each consisting of EG heterodimers, one central rotor including subunits D and F, and the regulatory subunits C and H. The proton translocation complex V0 consists of the proton transport subunit a, a ring of proteolipid subunits c9c'', rotary subunit d, subunits e and f, and the accessory subunits vah-19/Ac45 and vah-20/PRR.

The protein localises to the membrane. Proton-conducting pore forming subunit of the V0 complex of vacuolar(H+)-ATPase (V-ATPase), a multisubunit enzyme composed of a peripheral complex (V1) that hydrolyzes ATP and a membrane integral complex (V0) that translocates protons. V-ATPase is responsible for acidifying and maintaining the pH of intracellular compartments and in some cell types, is targeted to the plasma membrane, where it is responsible for acidifying the extracellular environment. The polypeptide is V-type proton ATPase 16 kDa proteolipid subunit c (12) (Ascaris suum (Pig roundworm)).